A 421-amino-acid polypeptide reads, in one-letter code: Exoskeleton protein RP43 (421 aa).

Positions 1 to 24 (MRVIFVISLVSFMFVTWQTNPVHC) are cleaved as a signal peptide. Disulfide bonds link Cys72–Cys104, Cys132–Cys154, Cys193–Cys219, Cys247–Cys269, Cys309–Cys335, and Cys362–Cys384. 3 CUB domains span residues 72–191 (CSKP…YSIV), 193–306 (CNSL…YSVP), and 309–421 (CSVV…YTTG).

Detected in vestimentum and trunk but not in opisthosome or obturaculum. In the vestimentum, expression is restricted to epithelial cells under apical cuticular plaques.

May play a role in protein-protein interactions during tube assembly. This Riftia pachyptila (Vent tube worm) protein is Exoskeleton protein RP43.